The chain runs to 166 residues: Eukaryotic translation initiation factor 5A (166 aa).

Hypusine is present on K52. The interval 99–125 is disordered; sequence DREDPSKPAHLSLMDDEGETRDNLDMP.

Belongs to the eIF-5A family. Lys-52 undergoes hypusination, a unique post-translational modification that consists in the addition of a butylamino group from spermidine to lysine side chain, leading to the formation of the unusual amino acid hypusine. eIF-5As are the only known proteins to undergo this modification, which is essential for their function. Hypusination is mediated by the consecutive action of deoxyhypusine synthase DHSc and deoxyhypusine hydroxylase DOHH.

It is found in the cytoplasm. In terms of biological role, translation factor that promotes translation elongation and termination, particularly upon ribosome stalling at specific amino acid sequence contexts. Binds between the exit (E) and peptidyl (P) site of the ribosome and promotes rescue of stalled ribosome: specifically required for efficient translation of polyproline-containing peptides as well as other motifs that stall the ribosome. Acts as a ribosome quality control (RQC) cofactor by joining the RQC complex to facilitate peptidyl transfer during CAT tailing step. Required for cell growth during both bloodstream (BF) and insect procyclic (PF) life cycle stages and for survival of the bloodstream form. The sequence is that of Eukaryotic translation initiation factor 5A from Trypanosoma brucei brucei (strain 927/4 GUTat10.1).